The sequence spans 414 residues: MSFANMFNKLSGQPESYEKKSLYRFGRTLGAGTYGIVREADCSSGKVAVKIILKRNVRGNERMVYDELDLLQKLNHPHIVHFVDWFESKDKFYIVTQLATGGELFDRICEYGKFTEKDASQTIRQVLDAVNYLHQRNIVHRDLKPENLLYLTRDLDSQLVLADFGIAKMLDNPAEVLTSMAGSFGYAAPEVMLKQGHGKAVDIWSLGVITYTLLCGYSPFRSENLTDLIEECRSGRVVFHERYWKDVSKDAKDFILSLLQVDPAQRPTSEEALKHPWLKGESASDRDLLPEIRAYIARSRLKRGIEIIKLANRIEALKMQEEDEEDIPSAVDVQASEASDKSGLSPFPALSTENSNTHPASTGNGESGGTKKRSLSKIARGAIFREVVLAKVREMKENEEREKVEREARERAHS.

The region spanning 23-278 (YRFGRTLGAG…SEEALKHPWL (256 aa)) is the Protein kinase domain. ATP contacts are provided by residues 29–37 (LGAGTYGIV) and lysine 50. Aspartate 142 (proton acceptor) is an active-site residue. Positions 278-314 (LKGESASDRDLLPEIRAYIARSRLKRGIEIIKLANRI) are autoinhibitory domain. Residues 293 to 315 (RAYIARSRLKRGIEIIKLANRIE) form a calmodulin-binding region. Disordered regions lie at residues 320–375 (QEED…KRSL) and 394–414 (EMKENEEREKVEREARERAHS). The segment covering 351-364 (STENSNTHPASTGN) has biased composition (polar residues).

It belongs to the protein kinase superfamily. CAMK Ser/Thr protein kinase family. CaMK subfamily. As to quaternary structure, monomer. Post-translationally, autophosphorylated in a calcium/calmodulin-dependent manner.

It catalyses the reaction L-seryl-[protein] + ATP = O-phospho-L-seryl-[protein] + ADP + H(+). It carries out the reaction L-threonyl-[protein] + ATP = O-phospho-L-threonyl-[protein] + ADP + H(+). With respect to regulation, activated by Ca(2+)/calmodulin. Binding of calmodulin may relieve intrasteric autoinhibition. In terms of biological role, calcium/calmodulin-dependent protein kinase. Required in nuclear division cycle for progression from G2 to mitosis. Required for hyphal growth. This is Calcium/calmodulin-dependent protein kinase cmkA (cmkA) from Emericella nidulans (strain FGSC A4 / ATCC 38163 / CBS 112.46 / NRRL 194 / M139) (Aspergillus nidulans).